A 1006-amino-acid chain; its full sequence is GATA zinc finger domain-containing protein 7 (1006 aa).

Low complexity predominate over residues 55 to 70 (SSSNNFINNHHNNQSS). 5 disordered regions span residues 55–116 (SSSN…APNL), 128–248 (PFQN…DPFY), 381–499 (NAKK…PLST), 528–638 (STSG…SSNS), and 657–800 (YNSN…NYHD). Positions 71–86 (DIHSISQSTPNLSTLI) are enriched in polar residues. 2 stretches are compositionally biased toward low complexity: residues 87 to 110 (SSSSNNNNNNNNNNSPNYSMNSSS) and 128 to 158 (PFQNQQQQQPTSEVSTNSANTSSENTTCNNS). Residues 159 to 168 (PVSSSTNYIP) show a composition bias toward polar residues. Residues 169-180 (NNSTSNVVLNSS) show a composition bias toward low complexity. The segment covering 181–190 (IPTTSPNVLS) has biased composition (polar residues). Composition is skewed to low complexity over residues 205–241 (NNNNINNNNINNNINNNNNNNNNNNNNNNNNNNNNNN) and 388–410 (TNTNNNNNNNNNNNNNNNNNNNN). The segment covering 411–426 (IQQANVNTSPISTSTT) has biased composition (polar residues). Composition is skewed to low complexity over residues 427-456 (PNNNNNNQIQNQPQQIPQQQAQQQAQQQAQ) and 468-496 (SITPSISLTPTTVTSSSSTNSSGSIGASP). Positions 528–539 (STSGMLSTTNPY) are enriched in polar residues. Residues 540–557 (THHSPNTSSTVSSSVTSP) show a composition bias toward low complexity. Polar residues predominate over residues 558 to 589 (LINQYGTNPTLTNNHSFYGSLASNQNTGASDG). Composition is skewed to low complexity over residues 590-601 (NNNNNNNNNNNN) and 619-638 (SSNPLNNNHNSNNVYNSSNS). Residues 662 to 680 (GSGMTTPQSLGHSPSHNDY) are compositionally biased toward polar residues. Composition is skewed to low complexity over residues 681-706 (NSNNNNNNNNNNNSNNNNSNNSNSNN) and 713-785 (SNSS…SSNN). The segment at 842 to 867 (CHNCGTKNTPEWRRGPSGPATLCNAC) adopts a GATA-type zinc-finger fold. The tract at residues 925 to 957 (NNASSSSSSSSSSSSSSSSSSSTSSYSSSSYNI) is disordered. Over residues 928 to 954 (SSSSSSSSSSSSSSSSSSSTSSYSSSS) the composition is skewed to low complexity.

The chain is GATA zinc finger domain-containing protein 7 (gtaG) from Dictyostelium discoideum (Social amoeba).